The chain runs to 542 residues: Protein OS-9 homolog (542 aa).

The first 21 residues, 1-21 (MQAKIIYALSAISALIPLGSS), serve as a signal peptide directing secretion. Residues N52 and N74 are each glycosylated (N-linked (GlcNAc...) asparagine). Cystine bridges form between C70–C258, C117–C130, C193–C227, and C208–C239. The region spanning 115-241 (ERCIFYQAGF…QVTIPELCNL (127 aa)) is the MRH domain. Positions 125, 137, 194, 200, 223, and 229 each coordinate a mannooligosaccharide derivative. N-linked (GlcNAc...) asparagine glycosylation occurs at N380. Residues 497 to 528 (NARMDDDESTSHTTRDIGEAGSQTTGNTESEV) form a disordered region. Basic and acidic residues predominate over residues 505–514 (STSHTTRDIG). Residues 517–528 (GSQTTGNTESEV) are compositionally biased toward polar residues. The short motif at 539–542 (HDEL) is the Prevents secretion from ER element.

It belongs to the OS-9 family. In terms of assembly, homodimer. Component of the HRD1 ubiquitin ligase complex which contains the E3 ligase HRD1, its cofactors HRD3, USA1 and DER1, substrate recruiting factor YOS9 and CDC48-binding protein UBX2. Within the complex, interacts (via N-terminus) with HRD3. In ERAD-L, HRD3 and YOS9 jointly bind misfolded glycoproteins in the endoplasmic reticulum (ER) lumen. Movement of ERAD-L substrates through the ER membrane is facilitated by HRD1 and DER1 which have lateral gates facing each other and which distort the membrane region between the lateral gates, making it much thinner than a normal phospholipid bilayer. Substrates insert into the membrane as a hairpin loop with one strand interacting with DER1 and the other with HRD1. The HRD1 complex interacts with the heterotrimeric CDC48-NPL4-UFD1 ATPase complex which is recruited by UBX2 via its interaction with CDC48 and which moves ubiquitinated substrates to the cytosol for targeting to the proteasome. Interacts with KAR2 and EMP47. Interacts with misfolded ER lumenal proteins like PCR1. Interacts with the GPI-anchored proteins GAS1 and MKC7.

The protein resides in the endoplasmic reticulum membrane. Its function is as follows. Lectin involved in the quality control of the secretory pathway. As a member of the endoplasmic reticulum-associated degradation lumenal (ERAD-L) surveillance system, targets misfolded endoplasmic reticulum lumenal glycoproteins for degradation. The recognition of targets is N-glycan specific. Functions in recruiting misfolded protein substrates in conjunction with HRD3. In Saccharomyces cerevisiae (strain ATCC 204508 / S288c) (Baker's yeast), this protein is Protein OS-9 homolog (YOS9).